A 151-amino-acid chain; its full sequence is Large ribosomal subunit protein uL13 (151 aa).

This sequence belongs to the universal ribosomal protein uL13 family. In terms of assembly, part of the 50S ribosomal subunit.

Functionally, this protein is one of the early assembly proteins of the 50S ribosomal subunit, although it is not seen to bind rRNA by itself. It is important during the early stages of 50S assembly. In Synechococcus sp. (strain JA-3-3Ab) (Cyanobacteria bacterium Yellowstone A-Prime), this protein is Large ribosomal subunit protein uL13.